The chain runs to 294 residues: MVKISMKELLEAGVHFGHQTKRWNPKMKPYIFGARNGIYIVDLQKTVRMFRTACEFVSDVVANGGSVLFVGTKKQAREAVYEEANRAEAYYVHNRWLGGMLTNFQTIKKGIDRLNYLNEIKLNETINLFPKKERLKLEKERVKLDANLGGIRTMTKLPSVIFIIDPKNEAIAVREAKRLNIPTVAVVDTNCDPDDIDYVIPGNDDAIRAIRLLTSRIAEAVVQGKQIAAERRAAEQDKAADDKAQEQAAAEAAKPEPAAPAPAAEAAEEAPAEEGPIIEVIKKSGSEEDGEAAN.

Residues 232–245 are compositionally biased toward basic and acidic residues; the sequence is RAAEQDKAADDKAQ. The interval 232 to 294 is disordered; the sequence is RAAEQDKAAD…GSEEDGEAAN (63 aa). The segment covering 246-265 has biased composition (low complexity); that stretch reads EQAAAEAAKPEPAAPAPAAE.

This sequence belongs to the universal ribosomal protein uS2 family.

The chain is Small ribosomal subunit protein uS2 from Desulfatibacillum aliphaticivorans.